Reading from the N-terminus, the 299-residue chain is Dye-decolorizing peroxidase YfeX (299 aa).

The active-site Proton acceptor is the Asp-143. His-215 serves as a coordination point for heme.

The protein belongs to the DyP-type peroxidase family. Heme b serves as cofactor.

The protein resides in the cytoplasm. Its function is as follows. Has both general peroxidase activity and dye-decolorizing activity. Can catalyze the oxidation of both protoporphyrinogen IX and coproporphyrinogen III to their corresponding porphyrins. Also efficiently decolorizes the dyes alizarin red and Cibacron blue F3GA. The protein is Dye-decolorizing peroxidase YfeX (yfeX) of Escherichia coli (strain K12).